The sequence spans 389 residues: MGRGLMNSLKPYLAMISMQFGYAGMYIITMVSLKHGMNHYVLAVYRHAIATAVIAPFALFHERKIRPKMTFRIFLQIALLGFIEPVLDQNLYYVGMTYTSATFASATANVLPAITFVLAIIFRLESVNFKKVRSIAKVVGTVITVSGALLMTLYKGPIVDFIRFGGGGGGGSDGAGGSHGGAGAAAMDKHWIPGTLMLLGRTFGWAGFFILQSFTLKQYPAELSLTTLICLMGTLEGTAVSLVTVRDLSAWKIGFDSNLFAAAYSGVICSGVAYYVQGVVMRERGPVFVATFNPLCVVITAALGVVVLSESIHLGSVIGTLFIIVGLYTVVWGKGKDKRMTDDDEDCKGLPIKSPVKPVDTGKGLAAELEMKSKEGQEAKATTTTQVEI.

The next 10 helical transmembrane spans lie at 13–33, 40–60, 73–93, 102–122, 142–162, 191–211, 225–245, 260–280, 287–307, and 312–332; these read LAMI…MVSL, YVLA…FALF, IFLQ…NLYY, TFAS…AIIF, VITV…VDFI, WIPG…FFIL, LTTL…LVTV, FAAA…QGVV, VFVA…GVVV, and IHLG…TVVW. EamA domains are found at residues 23 to 150 and 205 to 331; these read AGMY…GALL and WAGF…YTVV. The tract at residues 339–361 is disordered; sequence RMTDDDEDCKGLPIKSPVKPVDT.

It belongs to the drug/metabolite transporter (DMT) superfamily. Plant drug/metabolite exporter (P-DME) (TC 2.A.7.4) family.

The protein resides in the membrane. In Arabidopsis thaliana (Mouse-ear cress), this protein is WAT1-related protein At1g21890.